The following is a 312-amino-acid chain: Glycine--tRNA ligase alpha subunit (312 aa).

It belongs to the class-II aminoacyl-tRNA synthetase family. In terms of assembly, tetramer of two alpha and two beta subunits.

It is found in the cytoplasm. The catalysed reaction is tRNA(Gly) + glycine + ATP = glycyl-tRNA(Gly) + AMP + diphosphate. The chain is Glycine--tRNA ligase alpha subunit (glyQ) from Buchnera aphidicola subsp. Acyrthosiphon pisum (strain APS) (Acyrthosiphon pisum symbiotic bacterium).